Consider the following 309-residue polypeptide: Peptide methionine sulfoxide reductase MsrA/MsrB (309 aa).

Residues 1 to 153 are peptide methionine sulfoxide reductase A; the sequence is MIYLAGGCFW…PNGYCHIDIN (153 aa). The active site involves Cys-8. The 124-residue stretch at 170 to 293 folds into the MsrB domain; that stretch reads ATEIKEKLSA…NSLSITFIPK (124 aa). Catalysis depends on Cys-282, which acts as the Nucleophile.

It in the N-terminal section; belongs to the MsrA Met sulfoxide reductase family. The protein in the C-terminal section; belongs to the MsrB Met sulfoxide reductase family.

It catalyses the reaction L-methionyl-[protein] + [thioredoxin]-disulfide + H2O = L-methionyl-(S)-S-oxide-[protein] + [thioredoxin]-dithiol. It carries out the reaction [thioredoxin]-disulfide + L-methionine + H2O = L-methionine (S)-S-oxide + [thioredoxin]-dithiol. The catalysed reaction is L-methionyl-[protein] + [thioredoxin]-disulfide + H2O = L-methionyl-(R)-S-oxide-[protein] + [thioredoxin]-dithiol. Has an important function as a repair enzyme for proteins that have been inactivated by oxidation. Catalyzes the reversible oxidation-reduction of methionine sulfoxide in proteins to methionine. This chain is Peptide methionine sulfoxide reductase MsrA/MsrB (msrAB), found in Streptococcus pyogenes serotype M18 (strain MGAS8232).